The following is a 753-amino-acid chain: Synaptotagmin-like protein 5 (753 aa).

Residues 7 to 123 form the RabBD domain; that stretch reads FINLSFLLDH…IISGEWFLEE (117 aa). An FYVE-type zinc finger spans residues 64-106; it reads CVHCQKSLGLIFDRGAPCQACSLRVCSECRVTGLDGSWKCTVC. Disordered regions lie at residues 145–188, 221–283, and 298–359; these read RRSP…GFLL, SFKS…GFEN, and TKSH…LNSL. Residue Ser-147 is modified to Phosphoserine. The span at 224–238 shows a compositional bias: low complexity; it reads SVSGSDRGSTTSSDL. Polar residues-rich tracts occupy residues 260 to 275 and 305 to 316; these read TQRS…TSIS and TSGTPSIAVSGT. C2 domains are found at residues 429–550 and 590–717; these read VTGE…DEWF and PQGK…VDWM.

As to quaternary structure, binds RAB27A that has been activated by GTP-binding.

Its subcellular location is the membrane. Functionally, may act as Rab effector protein and play a role in vesicle trafficking. Binds phospholipids. The chain is Synaptotagmin-like protein 5 (Sytl5) from Rattus norvegicus (Rat).